A 165-amino-acid polypeptide reads, in one-letter code: Protein eva-1 homolog B (165 aa).

Residues 29-49 form a helical membrane-spanning segment; the sequence is GLYFVLGVCFGLLLTLCLLVI. Disordered regions lie at residues 57-109 and 143-165; these read PRPR…GPLN and LLGT…MHYY. Residues 74–84 show a composition bias toward acidic residues; sequence EPEDDDEDEED. 3 positions are modified to phosphothreonine: T85, T148, and T158.

This sequence belongs to the EVA1 family.

Its subcellular location is the membrane. The chain is Protein eva-1 homolog B (EVA1B) from Homo sapiens (Human).